The sequence spans 1358 residues: DNA-directed RNA polymerase subunit beta (1358 aa).

The protein belongs to the RNA polymerase beta chain family. As to quaternary structure, the RNAP catalytic core consists of 2 alpha, 1 beta, 1 beta' and 1 omega subunit. When a sigma factor is associated with the core the holoenzyme is formed, which can initiate transcription.

The catalysed reaction is RNA(n) + a ribonucleoside 5'-triphosphate = RNA(n+1) + diphosphate. In terms of biological role, DNA-dependent RNA polymerase catalyzes the transcription of DNA into RNA using the four ribonucleoside triphosphates as substrates. The sequence is that of DNA-directed RNA polymerase subunit beta from Methylococcus capsulatus (strain ATCC 33009 / NCIMB 11132 / Bath).